We begin with the raw amino-acid sequence, 486 residues long: Pentatricopeptide repeat-containing protein At2g01860 (486 aa).

The tract at residues 111-137 (QKPDKPSRVRPLPLPQPHKLRPLGLPT) is disordered. PPR repeat units follow at residues 290-321 (DSSVYVKMILEIAKNPDKYHLVVALLEELKKR), 327-361 (SQQDCTSIMKICVKLGEFELVESLFDWFKASNREP), 362-396 (SVVMYTTMIHSRYSEQKYREAMSVVWEMEESNCLL), 397-431 (DLPAYRVVIKLFVALDDLGRAMRYYSKLKEAGFSP), and 432-466 (TYDIYRDMISVYTASGRLTKCKEICKEVEDAGLRL).

Belongs to the PPR family. P subfamily.

The chain is Pentatricopeptide repeat-containing protein At2g01860 (EMB975) from Arabidopsis thaliana (Mouse-ear cress).